A 305-amino-acid polypeptide reads, in one-letter code: Elongation factor Ts, mitochondrial (305 aa).

The protein belongs to the EF-Ts family.

It is found in the mitochondrion. In terms of biological role, associates with the EF-Tu.GDP complex and induces the exchange of GDP to GTP. It remains bound to the aminoacyl-tRNA.EF-Tu.GTP complex up to the GTP hydrolysis stage on the ribosome. The chain is Elongation factor Ts, mitochondrial (tsfm) from Danio rerio (Zebrafish).